We begin with the raw amino-acid sequence, 416 residues long: Serine hydroxymethyltransferase (416 aa).

Residues L121 and 125–127 (GHL) each bind (6S)-5,6,7,8-tetrahydrofolate. K229 bears the N6-(pyridoxal phosphate)lysine mark.

This sequence belongs to the SHMT family. Homodimer. Pyridoxal 5'-phosphate serves as cofactor.

The protein resides in the cytoplasm. The enzyme catalyses (6R)-5,10-methylene-5,6,7,8-tetrahydrofolate + glycine + H2O = (6S)-5,6,7,8-tetrahydrofolate + L-serine. Its pathway is one-carbon metabolism; tetrahydrofolate interconversion. It participates in amino-acid biosynthesis; glycine biosynthesis; glycine from L-serine: step 1/1. In terms of biological role, catalyzes the reversible interconversion of serine and glycine with tetrahydrofolate (THF) serving as the one-carbon carrier. This reaction serves as the major source of one-carbon groups required for the biosynthesis of purines, thymidylate, methionine, and other important biomolecules. Also exhibits THF-independent aldolase activity toward beta-hydroxyamino acids, producing glycine and aldehydes, via a retro-aldol mechanism. The chain is Serine hydroxymethyltransferase from Azoarcus sp. (strain BH72).